Reading from the N-terminus, the 451-residue chain is GTPase Der (451 aa).

EngA-type G domains follow at residues 5–170 (PVVA…VEPE) and 186–359 (IKLA…AAAF). Residues 11–18 (GRPNVGKS), 58–62 (DTGGF), 122–125 (NKAE), 192–199 (GRPNVGKS), 239–243 (DTAGL), and 304–307 (NKWD) contribute to the GTP site. One can recognise a KH-like domain in the interval 360–444 (AKLSTPKLTR…PLRIEFKSSR (85 aa)).

Belongs to the TRAFAC class TrmE-Era-EngA-EngB-Septin-like GTPase superfamily. EngA (Der) GTPase family. In terms of assembly, associates with the 50S ribosomal subunit.

In terms of biological role, GTPase that plays an essential role in the late steps of ribosome biogenesis. This Bordetella petrii (strain ATCC BAA-461 / DSM 12804 / CCUG 43448) protein is GTPase Der.